A 351-amino-acid polypeptide reads, in one-letter code: UDP-3-O-acylglucosamine N-acyltransferase (351 aa).

H239 acts as the Proton acceptor in catalysis.

This sequence belongs to the transferase hexapeptide repeat family. LpxD subfamily. Homotrimer.

The catalysed reaction is a UDP-3-O-[(3R)-3-hydroxyacyl]-alpha-D-glucosamine + a (3R)-hydroxyacyl-[ACP] = a UDP-2-N,3-O-bis[(3R)-3-hydroxyacyl]-alpha-D-glucosamine + holo-[ACP] + H(+). Its pathway is bacterial outer membrane biogenesis; LPS lipid A biosynthesis. Its function is as follows. Catalyzes the N-acylation of UDP-3-O-acylglucosamine using 3-hydroxyacyl-ACP as the acyl donor. Is involved in the biosynthesis of lipid A, a phosphorylated glycolipid that anchors the lipopolysaccharide to the outer membrane of the cell. The chain is UDP-3-O-acylglucosamine N-acyltransferase from Vibrio cholerae serotype O1 (strain ATCC 39315 / El Tor Inaba N16961).